Reading from the N-terminus, the 71-residue chain is MATRDSGGQSQTGRSQQGEEIEDVTTEASAEAAERHAEITEDVDDLLDEIDSVLEENAEEFVRGYVQKGGE.

The span at methionine 1–glycine 18 shows a compositional bias: low complexity. Positions methionine 1–aspartate 42 are disordered. Residues glutamate 27–tyrosine 65 form an ARC ATPase binding region. Positions serine 29–glutamate 60 form a coiled coil. Glutamate 71 is covalently cross-linked (Isoglutamyl lysine isopeptide (Glu-Lys) (interchain with K-? in acceptor proteins)).

This sequence belongs to the prokaryotic ubiquitin-like protein family. In terms of assembly, strongly interacts with the proteasome-associated ATPase ARC through a hydrophobic interface; the interacting region of Pup lies in its C-terminal half. There is one Pup binding site per ARC hexamer ring.

The protein operates within protein degradation; proteasomal Pup-dependent pathway. Its function is as follows. Protein modifier that is covalently attached to lysine residues of substrate proteins, thereby targeting them for proteasomal degradation. The tagging system is termed pupylation. The protein is Prokaryotic ubiquitin-like protein Pup of Salinispora tropica (strain ATCC BAA-916 / DSM 44818 / JCM 13857 / NBRC 105044 / CNB-440).